The primary structure comprises 434 residues: Lecithin-cholesterol acyltransferase-like 1 (434 aa).

Ser-191 acts as the Acyl-ester intermediate in catalysis. Active-site charge relay system residues include Asp-354 and His-386.

The protein belongs to the AB hydrolase superfamily. Lipase family.

The chain is Lecithin-cholesterol acyltransferase-like 1 from Oryza sativa subsp. japonica (Rice).